Consider the following 777-residue polypeptide: CRISPR system single-strand-specific deoxyribonuclease Cas10/Csm1 (subtype III-A) (777 aa).

One can recognise an HD domain in the interval 1–106 (MEIDELTALG…VYEADNLASG (106 aa)). The 148-residue stretch at 513–660 (RRLGVMKGDV…GRNRVFVVGR (148 aa)) folds into the GGDEF domain.

Belongs to the CRISPR-associated Cas10/Csm1 family. Probably part of the Csm effector complex, that includes Cas10, Csm2, Csm3, Csm4, Csm5 and mature crRNA. Will form a homodimer in solution, interacts with Csm4, which is a tighter, better association than the homodimeric Cas10 and uses the same interface for interaction. Requires a divalent metal cation as cofactor.

Its activity is regulated as follows. ssDNase activity is inhibited by EDTA. In terms of biological role, CRISPR (clustered regularly interspaced short palindromic repeat) is an adaptive immune system that provides protection against mobile genetic elements (viruses, transposable elements and conjugative plasmids). CRISPR clusters contain spacers, sequences complementary to antecedent mobile elements, and target invading nucleic acids. CRISPR clusters are transcribed and processed into CRISPR RNA (crRNA). The type III-A Csm effector complex binds crRNA and acts as a crRNA-guided RNase, DNase and cyclic oligoadenylate synthase; binding of target RNA cognate to the crRNA is required for all activities. Its function is as follows. A single-strand deoxyribonuclease (ssDNase) which digests linear and circular ssDNA; has 5'-3' and 3'-5' exonuclease activity as well as a less efficient endonuclease activity. Has a minimal size requirement; 100 nucleotide ssDNA (nt) is more efficiently digested than 50 or 25 nt ssDNA, while 14 nt ssDNA is not cleaved at all. It has no activity on dsDNA or ssRNA. Functionally, ssDNase activity is stimulated in the ternary Csm effector complex; binding of cognate target RNA activates the ssDNase, as the target RNA is degraded ssDNA activity decreases. When associated with the ternary Csm effector complex (the crRNA, Cas proteins and a cognate target ssRNA) synthesizes cyclic oligoadenylates (cOA) from ATP. cOAs are second messengers that stimulate the ssRNase activity of Csm6, inducing an antiviral state important for defense against invading nucleic acids. This Thermococcus onnurineus (strain NA1) protein is CRISPR system single-strand-specific deoxyribonuclease Cas10/Csm1 (subtype III-A).